Consider the following 189-residue polypeptide: Probable nicotinate-nucleotide adenylyltransferase (189 aa).

It belongs to the NadD family.

It catalyses the reaction nicotinate beta-D-ribonucleotide + ATP + H(+) = deamido-NAD(+) + diphosphate. It functions in the pathway cofactor biosynthesis; NAD(+) biosynthesis; deamido-NAD(+) from nicotinate D-ribonucleotide: step 1/1. Catalyzes the reversible adenylation of nicotinate mononucleotide (NaMN) to nicotinic acid adenine dinucleotide (NaAD). In Caulobacter sp. (strain K31), this protein is Probable nicotinate-nucleotide adenylyltransferase.